The following is a 350-amino-acid chain: MVPAACMLLWALLLSLEYRAAGAEDQTTTPTATTIGMQRVSFRFGGPARSLHSTNPTARTTVPGKLRVTLEDENDALATADRLALPAAAELLSTVTGYSRSSVPSPSDWEEDGSLEEGVVDTRKTTNGPVSLFSTTNTVGSSGTTGRFLANSQEREIKLTTDVRSLSSKTTVVDLSSESTLQQWSTPGSTPSPWLKPSFTAMPSPEDLRVVLMPWGPWHCHCKSGTMSRSRAGKLHGLSGRLRVGALNELRTEHRPCTYQLCACNRHLEECPLDSSLCSDHSCSSRAPFQSSTTSLVPVHLRRRPILPPTSPSPSPALAFWKRVRIGLEDIWNSLSSVFTETQPVERIQR.

The N-terminal stretch at 1 to 23 (MVPAACMLLWALLLSLEYRAAGA) is a signal peptide.

Phosphorylation sites are present in the extracellular medium. In terms of tissue distribution, high expression in testis, but low in other tissues.

The protein resides in the secreted. Functionally, involved in control of cellular proliferation. Onconcogenic modifier contributing to the tumor suppressor function of DNMT3B. This chain is Protein MENT (Ment), found in Mus musculus (Mouse).